Consider the following 275-residue polypeptide: MSMQSHHVHLVSDATGETVSNVVRACLAQFEDVRVVQHRWWLLRSPSQVGRVIEGIQRDPGTVVFTVVDPEIRRALEEACRLINIPCVALLDPVMDALALVLETKGNQQPGRQYTLDEGYFSRIEAMHFALALDDGQSLDRLKQAEVVVVGVSRTSKTPTCMFLANKGIRAANVPLVPGIDPPAELMDLAGPLVVGLTRDPKSLSDMRRSRLRLMREDGDSPYAEEDSVAREVREARRLYARMGWTVIDVTRKSIEEVAATIMQKLGTAPWGEGL.

An ADP-binding site is contributed by 151–158 (GVSRTSKT).

The protein belongs to the pyruvate, phosphate/water dikinase regulatory protein family. PDRP subfamily.

It carries out the reaction N(tele)-phospho-L-histidyl/L-threonyl-[pyruvate, phosphate dikinase] + ADP = N(tele)-phospho-L-histidyl/O-phospho-L-threonyl-[pyruvate, phosphate dikinase] + AMP + H(+). The enzyme catalyses N(tele)-phospho-L-histidyl/O-phospho-L-threonyl-[pyruvate, phosphate dikinase] + phosphate + H(+) = N(tele)-phospho-L-histidyl/L-threonyl-[pyruvate, phosphate dikinase] + diphosphate. Its function is as follows. Bifunctional serine/threonine kinase and phosphorylase involved in the regulation of the pyruvate, phosphate dikinase (PPDK) by catalyzing its phosphorylation/dephosphorylation. In Rhodospirillum rubrum (strain ATCC 11170 / ATH 1.1.1 / DSM 467 / LMG 4362 / NCIMB 8255 / S1), this protein is Putative pyruvate, phosphate dikinase regulatory protein.